A 1194-amino-acid polypeptide reads, in one-letter code: Multidrug efflux ATP-binding/permease protein BCG_0231 (1194 aa).

Helical transmembrane passes span 20–40 (LLLGFGAALAGTVIAVLVPLV), 56–76 (LAPWAVVLVAAAGATYLLTYV), 130–150 (LLFDVPNVLRHVLTLLLGVAV), 153–173 (WLSVPLALLAVLLVPVIGLIA), 258–278 (FALGGWMAAQGSITVGTFVAF), and 279–299 (WACLTLLARPACDLAGMLTIA). One can recognise an ABC transmembrane type-1 1 domain in the interval 21–301 (LLGFGAALAG…LAGMLTIAQQ (281 aa)). Positions 334-568 (LEFQRVSFGY…CPRYRELLSP (235 aa)) constitute an ABC transporter 1 domain. 367 to 374 (GAPGSGKS) is a binding site for ATP. A run of 6 helical transmembrane segments spans residues 628–648 (ALSLLLVAVQTCAGLLPPLLI), 660–680 (VLSALWWAALAGTATVVIRWV), 743–763 (LVVAVISVVTLVGILVALLAI), 765–785 (ARLVLLIFTTMPVLALATWQF), 847–867 (LLALYYPFVALLCSLATTLVL), and 878–898 (VISVGALVTYLLYIELLYTPI). One can recognise an ABC transmembrane type-1 2 domain in the interval 628-910 (ALSLLLVAVQ…LAQMFDDYQR (283 aa)). The 236-residue stretch at 942 to 1177 (VVFDAVHYSY…GGHYSRLWAA (236 aa)) folds into the ABC transporter 2 domain. Residue 976 to 983 (GSTGSGKS) coordinates ATP.

This sequence belongs to the ABC transporter superfamily. Lipid exporter (TC 3.A.1.106) family.

Its subcellular location is the cell inner membrane. In terms of biological role, overexpression increases resistance to chloramphenicol, ampicillin, streptomycin, tetracyclin and vancomycin. This is Multidrug efflux ATP-binding/permease protein BCG_0231 from Mycobacterium bovis (strain BCG / Pasteur 1173P2).